The primary structure comprises 549 residues: Ceramide kinase 1 (549 aa).

Residues 162 to 316 (NRPKNIIIFI…VDVCTVHQHQ (155 aa)) form the DAGKc domain. ATP is bound by residues 172–174 (NPF) and 205–209 (TERAN). A substrate-binding site is contributed by 233 to 236 (GGDG). The active-site Proton donor/acceptor is the D235. Residues E240, 277-279 (GSA), R342, R348, and 500-502 (DGE) contribute to the ATP site.

The enzyme catalyses an N-acylsphing-4-enine + ATP = an N-acylsphing-4-enine 1-phosphate + ADP + H(+). It catalyses the reaction an N-acyl-15-methylhexadecasphing-4-enine + ATP = an N-acyl-15-methylhexadecasphing-4-enine-1-phosphate + ADP + H(+). The protein operates within lipid metabolism; sphingolipid metabolism. Catalyzes the phosphorylation of ceramide to form ceramide 1-phosphate. C.elegans contain specific sphingoid bases, which are unique or different in structure compared to the sphingoid bases found in other animals. Two examples of these distinctive compounds are: 15-methylhexadecasphinganine and 15-methylhexadecasphing-4-enine. This is Ceramide kinase 1 from Caenorhabditis elegans.